The sequence spans 298 residues: N-acetylmuramic acid 6-phosphate etherase (298 aa).

The 164-residue stretch at 55-218 (IHAQVSGGGR…STGLMIKSGK (164 aa)) folds into the SIS domain. E83 functions as the Proton donor in the catalytic mechanism. Residue E114 is part of the active site.

The protein belongs to the GCKR-like family. MurNAc-6-P etherase subfamily. Homodimer.

The enzyme catalyses N-acetyl-D-muramate 6-phosphate + H2O = N-acetyl-D-glucosamine 6-phosphate + (R)-lactate. It functions in the pathway amino-sugar metabolism; 1,6-anhydro-N-acetylmuramate degradation. The protein operates within amino-sugar metabolism; N-acetylmuramate degradation. Its pathway is cell wall biogenesis; peptidoglycan recycling. In terms of biological role, specifically catalyzes the cleavage of the D-lactyl ether substituent of MurNAc 6-phosphate, producing GlcNAc 6-phosphate and D-lactate. Together with AnmK, is also required for the utilization of anhydro-N-acetylmuramic acid (anhMurNAc) either imported from the medium or derived from its own cell wall murein, and thus plays a role in cell wall recycling. This is N-acetylmuramic acid 6-phosphate etherase from Shigella sonnei (strain Ss046).